The chain runs to 195 residues: Adenylate kinase (195 aa).

10 to 15 provides a ligand contact to ATP; sequence GAGKGT. The interval 30–59 is NMP; the sequence is STGDMLRAAVAAGTPVGLKAKAVMDAGGLV. AMP-binding positions include Thr31, Arg36, 57 to 59, 85 to 88, and Gln92; these read GLV and GFPR. Residues 126–143 form an LID region; sequence NRAAEAQAKGEAVRKDDD. An ATP-binding site is contributed by Arg127. Arg150 contributes to the AMP binding site. Ala178 is a binding site for ATP.

This sequence belongs to the adenylate kinase family. In terms of assembly, monomer.

The protein localises to the cytoplasm. It catalyses the reaction AMP + ATP = 2 ADP. It functions in the pathway purine metabolism; AMP biosynthesis via salvage pathway; AMP from ADP: step 1/1. Functionally, catalyzes the reversible transfer of the terminal phosphate group between ATP and AMP. Plays an important role in cellular energy homeostasis and in adenine nucleotide metabolism. The sequence is that of Adenylate kinase from Xanthobacter autotrophicus (strain ATCC BAA-1158 / Py2).